The sequence spans 538 residues: Chaperonin GroEL 1 (538 aa).

ATP contacts are provided by residues 29-32 (TLGP), 86-90 (DGTTT), Gly413, 478-480 (NAA), and Asp494.

Belongs to the chaperonin (HSP60) family. Forms a cylinder of 14 subunits composed of two heptameric rings stacked back-to-back. Interacts with the co-chaperonin GroES.

The protein resides in the cytoplasm. The catalysed reaction is ATP + H2O + a folded polypeptide = ADP + phosphate + an unfolded polypeptide.. Together with its co-chaperonin GroES, plays an essential role in assisting protein folding. The GroEL-GroES system forms a nano-cage that allows encapsulation of the non-native substrate proteins and provides a physical environment optimized to promote and accelerate protein folding. This is Chaperonin GroEL 1 from Corynebacterium glutamicum (strain R).